Reading from the N-terminus, the 1060-residue chain is Carbamoyl phosphate synthase large chain (1060 aa).

Residues 1–401 are carboxyphosphate synthetic domain; the sequence is MPKRTDIRKI…SLLKACRSLE (401 aa). ATP contacts are provided by R129, R169, G175, G176, R208, I210, E215, G241, I242, H243, Q284, and E298. The 195-residue stretch at 133–327 folds into the ATP-grasp 1 domain; sequence KQLMEELNQP…IAKLAAKIAV (195 aa). Q284, E298, and N300 together coordinate Mg(2+). Q284, E298, and N300 together coordinate Mn(2+). Positions 402–546 are oligomerization domain; it reads IGVDHIKIAD…YSTYAVENES (145 aa). A carbamoyl phosphate synthetic domain region spans residues 547–929; the sequence is LISDKASILV…ALYKAFEAAY (383 aa). Positions 671-861 constitute an ATP-grasp 2 domain; that stretch reads EATLQALNIP…MAQVATKVIL (191 aa). ATP is bound by residues R707, A746, L748, E752, G777, V778, H779, S780, Q820, and E832. Residues Q820, E832, and N834 each coordinate Mg(2+). Residues Q820, E832, and N834 each contribute to the Mn(2+) site. The 131-residue stretch at 930–1060 folds into the MGS-like domain; sequence LHMPDYGNIV…SRAFTLKVLD (131 aa). Residues 930-1060 are allosteric domain; the sequence is LHMPDYGNIV…SRAFTLKVLD (131 aa).

Belongs to the CarB family. Composed of two chains; the small (or glutamine) chain promotes the hydrolysis of glutamine to ammonia, which is used by the large (or ammonia) chain to synthesize carbamoyl phosphate. Tetramer of heterodimers (alpha,beta)4. The cofactor is Mg(2+). Requires Mn(2+) as cofactor.

It catalyses the reaction hydrogencarbonate + L-glutamine + 2 ATP + H2O = carbamoyl phosphate + L-glutamate + 2 ADP + phosphate + 2 H(+). The catalysed reaction is hydrogencarbonate + NH4(+) + 2 ATP = carbamoyl phosphate + 2 ADP + phosphate + 2 H(+). The protein operates within amino-acid biosynthesis; L-arginine biosynthesis; carbamoyl phosphate from bicarbonate: step 1/1. It functions in the pathway pyrimidine metabolism; UMP biosynthesis via de novo pathway; (S)-dihydroorotate from bicarbonate: step 1/3. Large subunit of the glutamine-dependent carbamoyl phosphate synthetase (CPSase). CPSase catalyzes the formation of carbamoyl phosphate from the ammonia moiety of glutamine, carbonate, and phosphate donated by ATP, constituting the first step of 2 biosynthetic pathways, one leading to arginine and/or urea and the other to pyrimidine nucleotides. The large subunit (synthetase) binds the substrates ammonia (free or transferred from glutamine from the small subunit), hydrogencarbonate and ATP and carries out an ATP-coupled ligase reaction, activating hydrogencarbonate by forming carboxy phosphate which reacts with ammonia to form carbamoyl phosphate. In Streptococcus agalactiae serotype III (strain NEM316), this protein is Carbamoyl phosphate synthase large chain.